A 210-amino-acid chain; its full sequence is Holliday junction branch migration complex subunit RuvA (210 aa).

The tract at residues 1 to 64 is domain I; that stretch reads MIGLIEGRVC…EDAQLLYGFL (64 aa). Residues 65–143 are domain II; the sequence is HPTERDVFRQ…HIQSDMSLLT (79 aa). The interval 144–154 is flexible linker; that stretch reads EVEQQIGIAAN. The interval 155 to 210 is domain III; sequence SEGVILAEVESALISLGYRDKEAQQAIKAARETDAGQQLVDTQSLLKLTLKQLSNF.

It belongs to the RuvA family. Homotetramer. Forms an RuvA(8)-RuvB(12)-Holliday junction (HJ) complex. HJ DNA is sandwiched between 2 RuvA tetramers; dsDNA enters through RuvA and exits via RuvB. An RuvB hexamer assembles on each DNA strand where it exits the tetramer. Each RuvB hexamer is contacted by two RuvA subunits (via domain III) on 2 adjacent RuvB subunits; this complex drives branch migration. In the full resolvosome a probable DNA-RuvA(4)-RuvB(12)-RuvC(2) complex forms which resolves the HJ.

Its subcellular location is the cytoplasm. In terms of biological role, the RuvA-RuvB-RuvC complex processes Holliday junction (HJ) DNA during genetic recombination and DNA repair, while the RuvA-RuvB complex plays an important role in the rescue of blocked DNA replication forks via replication fork reversal (RFR). RuvA specifically binds to HJ cruciform DNA, conferring on it an open structure. The RuvB hexamer acts as an ATP-dependent pump, pulling dsDNA into and through the RuvAB complex. HJ branch migration allows RuvC to scan DNA until it finds its consensus sequence, where it cleaves and resolves the cruciform DNA. This is Holliday junction branch migration complex subunit RuvA from Psychrobacter sp. (strain PRwf-1).